The sequence spans 567 residues: Putative laccase-17 (567 aa).

Residues 1–22 (MPSRGCSCWLLSLALLCSLAAA) form the signal peptide. 2 Plastocyanin-like domains span residues 30-146 (VIRE…PRDG) and 158-310 (ELAP…YGAA). N-linked (GlcNAc...) asparagine glycosylation is present at N76. Cu cation is bound by residues H80, H82, H125, and H127. N-linked (GlcNAc...) asparagine glycosylation is found at N187, N241, N298, N312, N327, N365, N368, N378, N388, and N430. The 137-residue stretch at 415–551 (DFPANPPVQF…AMAFLVDDGV (137 aa)) folds into the Plastocyanin-like 3 domain. Cu cation is bound by residues H468, H471, H473, H530, C531, H532, and H536.

This sequence belongs to the multicopper oxidase family. It depends on Cu cation as a cofactor.

It localises to the secreted. It is found in the extracellular space. Its subcellular location is the apoplast. The enzyme catalyses 4 hydroquinone + O2 = 4 benzosemiquinone + 2 H2O. Lignin degradation and detoxification of lignin-derived products. This is Putative laccase-17 (LAC17) from Oryza sativa subsp. japonica (Rice).